The following is a 349-amino-acid chain: MGFSPSFSCSAIGALILGCLLLQASNSNAQLRPDFYFGTCPFVFDIIGNIIVDELQTDPRIAASLLRLHFHDCFVRGCDASILLDNSTSFRTEKDAAPNANSARGFNVIDRMKVALERACPGRVSCADILTIASQISVLLSGGPWWPVPLGRRDSVEAFFALANTALPSPFFNLTQLKTAFADVGLNRTSDLVALSGGHTFGRAQCQFVTPRLYNFNGTNSPDPSLNPTYLVELRRLCPQNGNGTVLVNFDVVTPDAFDSQYYTNLRNGKGLIQSDQELFSTPGADTIPLVNQYSSDMSVFFRAFIDAMIRMGNLRPLTGTQGEIRQNCRVVNPRIRVVENDDGVVSSI.

A signal peptide spans 1–29; the sequence is MGFSPSFSCSAIGALILGCLLLQASNSNA. At Gln-30 the chain carries Pyrrolidone carboxylic acid. Intrachain disulfides connect Cys-40–Cys-120, Cys-73–Cys-78, Cys-126–Cys-329, and Cys-206–Cys-238. His-71 acts as the Proton acceptor in catalysis. Ca(2+) is bound by residues Asp-72, Val-75, Gly-77, Asp-79, and Ser-81. Asn-86 carries N-linked (GlcNAc...) asparagine glycosylation. Pro-168 is a binding site for substrate. N-linked (GlcNAc...) asparagine glycosylation is found at Asn-173 and Asn-187. His-199 contributes to the heme b binding site. Ca(2+) is bound at residue Thr-200. 2 N-linked (GlcNAc...) asparagine glycosylation sites follow: Asn-217 and Asn-243. Ca(2+)-binding residues include Asp-251, Thr-254, and Asp-259.

Belongs to the peroxidase family. Classical plant (class III) peroxidase subfamily. Heme b serves as cofactor. Ca(2+) is required as a cofactor. As to expression, mainly expressed in roots.

It is found in the secreted. The protein resides in the vacuole. The enzyme catalyses 2 a phenolic donor + H2O2 = 2 a phenolic radical donor + 2 H2O. Removal of H(2)O(2), oxidation of toxic reductants, biosynthesis and degradation of lignin, suberization, auxin catabolism, response to environmental stresses such as wounding, pathogen attack and oxidative stress. These functions might be dependent on each isozyme/isoform in each plant tissue. This chain is Peroxidase 22 (PER22), found in Arabidopsis thaliana (Mouse-ear cress).